We begin with the raw amino-acid sequence, 154 residues long: TSET complex member tstD (154 aa).

It belongs to the adaptor complexes small subunit family. As to quaternary structure, component of the TSET complex, a heterohexamer composed of tstA, tstB, tstC, tstD, tstE and tstF, which may act in plasma membrane turnover. tstA, tstB, tstC and tstD are likely to be the core complex members with tstE and tstF acting as associated scaffold proteins.

It localises to the cell membrane. The protein localises to the cytoplasm. The chain is TSET complex member tstD from Dictyostelium discoideum (Social amoeba).